A 399-amino-acid polypeptide reads, in one-letter code: uncharacterized protein (399 aa).

The interval 254–335 (SRVSTGDTSP…FFRDSDDDGD (82 aa)) is disordered. Residues 255 to 264 (RVSTGDTSPY) show a composition bias toward polar residues. Residues 310–329 (RNAEMKKSHSANDSEEFFRD) are compositionally biased toward basic and acidic residues.

This is an uncharacterized protein from Xenopus laevis (African clawed frog).